Reading from the N-terminus, the 325-residue chain is Tetraacyldisaccharide 4'-kinase (325 aa).

55 to 62 (TAGGNGKT) provides a ligand contact to ATP.

This sequence belongs to the LpxK family.

It catalyses the reaction a lipid A disaccharide + ATP = a lipid IVA + ADP + H(+). Its pathway is glycolipid biosynthesis; lipid IV(A) biosynthesis; lipid IV(A) from (3R)-3-hydroxytetradecanoyl-[acyl-carrier-protein] and UDP-N-acetyl-alpha-D-glucosamine: step 6/6. Its function is as follows. Transfers the gamma-phosphate of ATP to the 4'-position of a tetraacyldisaccharide 1-phosphate intermediate (termed DS-1-P) to form tetraacyldisaccharide 1,4'-bis-phosphate (lipid IVA). This Salmonella paratyphi B (strain ATCC BAA-1250 / SPB7) protein is Tetraacyldisaccharide 4'-kinase.